We begin with the raw amino-acid sequence, 219 residues long: Mediator of RNA polymerase II transcription subunit 18 (219 aa).

It belongs to the Mediator complex subunit 18 family. As to quaternary structure, component of the Mediator complex. Interacts with YY1 to suppress disease susceptibility via the repression of genes glutaredoxins GRX480, GRXS13 and thioredoxin TRX-h5. Binds to ABI4 to regulate abscisic acid responses; recruited by ABI4 to ABI5 promoter in the presence of abscisic acid (ABA). Interacts with SUF4 to regulate flowering time; recruited by SUF4 to FLC promoter.

It is found in the nucleus. Component of the Mediator complex, a coactivator involved in the regulated transcription of nearly all RNA polymerase II-dependent genes. Mediator functions as a bridge to convey information from gene-specific regulatory proteins to the basal RNA polymerase II transcription machinery. The Mediator complex, having a compact conformation in its free form, is recruited to promoters by direct interactions with regulatory proteins and serves for the assembly of a functional pre-initiation complex with RNA polymerase II and the general transcription factors. Involved in the regulation of histone H3 lysine tri-methylation (H3K36me3). Associates with the promoter, coding and terminator regions of target genes suggesting its function in transcription initiation, elongation and termination. Multifunctional protein which regulates plant immunity, especially during necrotrophic fungal infection (e.g. B.cinerea and A.brassicicola), flowering time and responses to hormones (e.g. abscisic acid ABA and ethylene) through interactions with distinct transcription factors. The sequence is that of Mediator of RNA polymerase II transcription subunit 18 from Arabidopsis thaliana (Mouse-ear cress).